Here is a 408-residue protein sequence, read N- to C-terminus: Probable serine/threonine-protein kinase PBL16 (408 aa).

The N-myristoyl glycine moiety is linked to residue Gly2. Cys4 is lipidated: S-palmitoyl cysteine. Positions 17–50 are disordered; that stretch reads ANAKSESPKEQSPTVEDKHIKEVQKLPSNPKEVE. Polar residues predominate over residues 18-30; sequence NAKSESPKEQSPT. The segment covering 31–40 has biased composition (basic and acidic residues); the sequence is VEDKHIKEVQ. The residue at position 65 (Thr65) is a Phosphothreonine. Positions 76-360 constitute a Protein kinase domain; that stretch reads FRQDRVLGGG…DIVDSLEPLQ (285 aa). ATP-binding positions include 82–90 and Lys113; that span reads LGGGGFGSV. Tyr159 carries the phosphotyrosine modification. Asp209 acts as the Proton acceptor in catalysis. Phosphoserine occurs at positions 213 and 243. Phosphothreonine is present on residues Thr244 and Thr249. Position 257 is a phosphotyrosine (Tyr257).

Belongs to the protein kinase superfamily. Ser/Thr protein kinase family. In terms of processing, palmitoylation at Cys-4 and Cys-6 are required for plasma membrane location.

It is found in the cell membrane. It carries out the reaction L-seryl-[protein] + ATP = O-phospho-L-seryl-[protein] + ADP + H(+). The enzyme catalyses L-threonyl-[protein] + ATP = O-phospho-L-threonyl-[protein] + ADP + H(+). May be involved in plant defense signaling. This Arabidopsis thaliana (Mouse-ear cress) protein is Probable serine/threonine-protein kinase PBL16.